Here is a 30-residue protein sequence, read N- to C-terminus: Alpha-defensin PhD-4 (30 aa).

Disulfide bonds link Cys2-Cys30, Cys4-Cys19, and Cys9-Cys29.

It is found in the secreted. In low salt conditions, has antibacterial activity against the Gram-negative bacterium E.coli ML35p (MIC=2.4 uM), the Gram-positive bacteria L.monocytogenes EGD (MIC=2.2 uM) and methicillin-resistant S.aureus ATCC 33591 (MIC=3.5 uM), and the fungus C.albicans 820 (MIC=3.9 uM). At high physiological salt concentrations the antimicrobial activity decreases significantly: E.coli ML35p (MIC=7.1 uM), L.monocytogenes EGD (MIC=1.8 uM), S.aureus ATCC 33591 (MIC=&gt;50 uM), and C.albicans 820 (MIC=&gt;50 uM). The polypeptide is Alpha-defensin PhD-4 (Papio hamadryas (Hamadryas baboon)).